A 628-amino-acid chain; its full sequence is tRNA uridine 5-carboxymethylaminomethyl modification enzyme MnmG (628 aa).

Position 13–18 (13–18) interacts with FAD; it reads GAGHAG. An NAD(+)-binding site is contributed by 281-295; sequence GARYCPSIEDKIKKF.

It belongs to the MnmG family. Homodimer. Heterotetramer of two MnmE and two MnmG subunits. It depends on FAD as a cofactor.

It localises to the cytoplasm. Functionally, NAD-binding protein involved in the addition of a carboxymethylaminomethyl (cmnm) group at the wobble position (U34) of certain tRNAs, forming tRNA-cmnm(5)s(2)U34. This Treponema denticola (strain ATCC 35405 / DSM 14222 / CIP 103919 / JCM 8153 / KCTC 15104) protein is tRNA uridine 5-carboxymethylaminomethyl modification enzyme MnmG.